A 131-amino-acid polypeptide reads, in one-letter code: MHEMSVALAVIDQVEQAAQQAGDVTAVRSVRLQVGELAGVVPDSLSFCFELACAGTVLEGADLVTEEVPGRARCAPCAREWSVGMPPRLSCPECGGARVDLLSGRELQIVSVHWEDGRTHAQTREPISEER.

Residue His-2 coordinates Ni(2+). 4 residues coordinate Zn(2+): Cys-74, Cys-77, Cys-91, and Cys-94.

The protein belongs to the HypA/HybF family.

Functionally, involved in the maturation of [NiFe] hydrogenases. Required for nickel insertion into the metal center of the hydrogenase. This is Hydrogenase maturation factor HypA from Streptomyces avermitilis (strain ATCC 31267 / DSM 46492 / JCM 5070 / NBRC 14893 / NCIMB 12804 / NRRL 8165 / MA-4680).